Consider the following 319-residue polypeptide: ATP-dependent 6-phosphofructokinase (319 aa).

Gly11 serves as a coordination point for ATP. 21-25 is an ADP binding site; sequence RAVVR. ATP-binding positions include 72–73 and 102–105; these read RC and GDGS. Residue Asp103 coordinates Mg(2+). Residue 125–127 participates in substrate binding; that stretch reads TID. Asp127 functions as the Proton acceptor in the catalytic mechanism. Arg154 provides a ligand contact to ADP. Substrate is bound by residues Arg162 and 169–171; that span reads MGR. Residues 185-187, Arg211, and 213-215 contribute to the ADP site; these read GAE and KKH. Residues Glu222, Arg243, and 249–252 each bind substrate; that span reads HIQR.

This sequence belongs to the phosphofructokinase type A (PFKA) family. ATP-dependent PFK group I subfamily. Prokaryotic clade 'B1' sub-subfamily. Homotetramer. The cofactor is Mg(2+).

The protein localises to the cytoplasm. It catalyses the reaction beta-D-fructose 6-phosphate + ATP = beta-D-fructose 1,6-bisphosphate + ADP + H(+). It functions in the pathway carbohydrate degradation; glycolysis; D-glyceraldehyde 3-phosphate and glycerone phosphate from D-glucose: step 3/4. Allosterically activated by ADP and other diphosphonucleosides, and allosterically inhibited by phosphoenolpyruvate. Catalyzes the phosphorylation of D-fructose 6-phosphate to fructose 1,6-bisphosphate by ATP, the first committing step of glycolysis. This chain is ATP-dependent 6-phosphofructokinase, found in Halalkalibacterium halodurans (strain ATCC BAA-125 / DSM 18197 / FERM 7344 / JCM 9153 / C-125) (Bacillus halodurans).